An 893-amino-acid chain; its full sequence is DNA endonuclease RBBP8 (893 aa).

Positions 22 to 45 (ELWTKLKEYHDKEVQGLQVKVTKL) are essential for binding to the MRN complex and for RPA focus formation on DNA damage. Residues 35-84 (VQGLQVKVTKLKKERILDAQRLEEFFTKNQQLRDQQKVLQETIKILEDRL) are a coiled coil. Positions 45–160 (LKKERILDAQ…AELACEENII (116 aa)) are required for interaction with LMO4, probably by stabilizing the interaction through RPPB8 dimerization. Residues Lys62 and Lys115 each participate in a glycyl lysine isopeptide (Lys-Gly) (interchain with G-Cter in SUMO2) cross-link. A coiled-coil region spans residues 117-138 (ITELMNEKNTLQEENKKLSEQL). Residue Lys193 forms a Glycyl lysine isopeptide (Lys-Gly) (interchain with G-Cter in SUMO2) linkage. 2 positions are modified to phosphoserine: Ser233 and Ser276. Over residues 296 to 307 (MESARSKEDSLR) the composition is skewed to basic and acidic residues. Residues 296–324 (MESARSKEDSLRFSDSASKTPPQEFTTRA) form a disordered region. Residues 308–324 (FSDSASKTPPQEFTTRA) are compositionally biased toward polar residues. The residue at position 315 (Thr315) is a Phosphothreonine. Phosphoserine is present on residues Ser325, Ser326, and Ser348. Residues Lys359 and Lys377 each participate in a glycyl lysine isopeptide (Lys-Gly) (interchain with G-Cter in SUMO2) cross-link. Phosphoserine is present on Ser378. Residues Lys394, Lys403, Lys409, and Lys437 each participate in a glycyl lysine isopeptide (Lys-Gly) (interchain with G-Cter in SUMO2) cross-link. A PXDLS motif motif is present at residues 489–493 (PLDLS). The interval 508 to 556 (NETSKNKLKQATIYEALKPIPKGSSSGRKALSGDCMPAKDSWETYCLQP) is damage-recruitment motif. Lys525 participates in a covalent cross-link: Glycyl lysine isopeptide (Lys-Gly) (interchain with G-Cter in SUMO2); alternate. Residues Lys529, Lys570, and Lys576 each participate in a glycyl lysine isopeptide (Lys-Gly) (interchain with G-Cter in SUMO2) cross-link. A Glycyl lysine isopeptide (Lys-Gly) (interchain with G-Cter in SUMO2); alternate cross-link involves residue Lys602. Residues Lys611, Lys636, and Lys638 each participate in a glycyl lysine isopeptide (Lys-Gly) (interchain with G-Cter in SUMO2) cross-link. The interval 639–683 (ALPSNQDTSFENIQWSVDPGADLSQYKMDVTVIDTKDSSHSRLGG) is required for interaction with LMO4, probably by making physical contact with LMO4. Ser662 carries the post-translational modification Phosphoserine; by ATM. Residue Lys674 forms a Glycyl lysine isopeptide (Lys-Gly) (interchain with G-Cter in SUMO2) linkage. A Phosphoserine modification is found at Ser677. Lys716 participates in a covalent cross-link: Glycyl lysine isopeptide (Lys-Gly) (interchain with G-Cter in SUMO2). Phosphoserine is present on Ser720. Ser742 carries the post-translational modification Phosphoserine; by ATM. Lys778 is covalently cross-linked (Glycyl lysine isopeptide (Lys-Gly) (interchain with G-Cter in SUMO2)). The short motif at 836–838 (FRY) is the KLHL15-binding element. A phosphothreonine mark is found at Thr843 and Thr855. Residue Lys865 forms a Glycyl lysine isopeptide (Lys-Gly) (interchain with G-Cter in SUMO2) linkage. Positions 869–893 (DLSPRPKRRQPYNAVFSPKGKEQRT) are disordered.

The protein belongs to the COM1/SAE2/CtIP family. In terms of assembly, homotetramer; formed by antiparallel association of helical extensions protruding from the N-termini of two parallel coiled-coil dimers. Forms a dumbbell-shaped particle in which polar globular domains are held about 30 nm apart by a central rod. Homotetramerization is required for DNA-end resection and repair. Interacts (via the PXDLS motif) with CTBP1; the interaction is disrupted via binding of the adenovirus E1A to CTBP1. Component of the BRCA1-RBBP8 complex. Interacts (the Ser-326 phosphorylated form) with BRCA1 (via the C-terminal BRCT domains): the interaction occurs in the G2 phase, ubiquitinates RBBP8 and involves RBBP8 in BRCA1-dependent G2/M checkpoint control on DNA damage. Interacts with RB1. Interacts with the MRN complex. Interacts directly with MRE11; the interaction is required for efficient homologous recombination (HR) and regulation of the MRN complex. Interacts (when phosphorylated by CDK1) with NBN; promoting association with the MRN complex. Interacts with LMO4 (via the LIM zinc-binding 1 domain). Interacts with SIAH1. Interacts with RNF138. Interacts with EXD2. Interacts with CUL3 and KLHL15; this interaction leads to RBBP8 proteasomal degradation. Directly interacts with PIN1; this interaction depends upon RBBP8 phosphorylation, predominantly at Thr-315. Interacts with FZR1; this interaction leads to APC/C-mediated RBBP8 proteasomal degradation. Interacts with AUNIP; leading to recruit RBBP8 to sites of DNA damage. Interacts with SAMHD1. Interacts with HDGFL2. Post-translationally, hyperphosphorylation upon ionizing radiation results in dissociation from BRCA1. Phosphorylation at Thr-843 by CDK1 is essential for the recruitment to DNA and the DNA repair function. Phosphorylation at Thr-843 and Thr-855 promote interaction with NBN and recruitment to double-strand breaks (DSBs). Phosphorylated on Ser-326 as cells enter G2 phase. Phosphorylated at Ser-326 as cells enter G2 phase. This phosphorylation is required for binding BRCA1 and for the G2/M DNA damage transition checkpoint control. Phosphorylation at Thr-315 is required for PIN1-binding, while phosphorylation at Ser-276 serves as a PIN1 isomerization site. Phosphorylation at Thr-315 is cell-cycle dependent. It steadily increases during S phase, peaks at late S/G2 phase, and drops at G1. Phosphorylation is not required for tetramerization. Binds to DNA more strongly when dephosphorylated. In terms of processing, ubiquitinated. Ubiquitination at multiple sites by BRCA1 (via its N-terminal RING domain) does not lead to its proteasomal degradation but instead the ubiquitinated RBBP8 binds to chromatin following DNA damage and may play a role in G2/M checkpoint control. Ubiquitinated by RNF138 at its N-terminus. Ubiquitinated through 'Lys-48' by the E3 CUL3-KLHL15 complex; this modification leads to proteasomal degradation. Ubiquitinated by the E3 FZR1/APC/C complex; this modification leads to proteasomal degradation.

It localises to the nucleus. The protein resides in the chromosome. Endonuclease that cooperates with the MRE11-RAD50-NBN (MRN) complex in DNA-end resection, the first step of double-strand break (DSB) repair through the homologous recombination (HR) pathway. HR is restricted to S and G2 phases of the cell cycle and preferentially repairs DSBs resulting from replication fork collapse. Key determinant of DSB repair pathway choice, as it commits cells to HR by preventing classical non-homologous end-joining (NHEJ). Specifically promotes the endonuclease activity of the MRN complex to clear DNA ends containing protein adducts: recruited to DSBs by NBN following phosphorylation by CDK1, and promotes the endonuclease activity of MRE11 to clear protein-DNA adducts and generate clean double-strand break ends. Functions downstream of the MRN complex and ATM, promotes ATR activation and its recruitment to DSBs in the S/G2 phase facilitating the generation of ssDNA. Component of the BRCA1-RBBP8 complex that regulates CHEK1 activation and controls cell cycle G2/M checkpoints on DNA damage. During immunoglobulin heavy chain class-switch recombination, promotes microhomology-mediated alternative end joining (A-NHEJ) and plays an essential role in chromosomal translocations. Binds preferentially to DNA Y-junctions and to DNA substrates with blocked ends and promotes intermolecular DNA bridging. The chain is DNA endonuclease RBBP8 (Rbbp8) from Mus musculus (Mouse).